The chain runs to 234 residues: Peptidase E (234 aa).

Residues S123, D138, and H160 each act as charge relay system in the active site.

This sequence belongs to the peptidase S51 family.

It is found in the cytoplasm. It carries out the reaction Dipeptidase E catalyzes the hydrolysis of dipeptides Asp-|-Xaa. It does not act on peptides with N-terminal Glu, Asn or Gln, nor does it cleave isoaspartyl peptides.. Hydrolyzes dipeptides containing N-terminal aspartate residues. May play a role in allowing the cell to use peptide aspartate to spare carbon otherwise required for the synthesis of the aspartate family of amino acids. The protein is Peptidase E of Actinobacillus pleuropneumoniae serotype 7 (strain AP76).